The sequence spans 364 residues: Autophagy-related protein 14 (364 aa).

The interval 5–20 (CPICETQSHVFYCAHC) is cysteine repeats. Residues 38-114 (LGKINNALRN…QDRRIKEKSR (77 aa)) are a coiled coil.

Belongs to the ATG14 family. In terms of assembly, component of the autophagy-specific VPS34 PI3-kinase complex I composed of VPS15, VPS30, VPS34, ATG14 and ATG38. Interacts directly with ATG38.

The protein localises to the preautophagosomal structure membrane. It is found in the vacuole membrane. Its function is as follows. Required for cytoplasm to vacuole transport (Cvt) and autophagy as a part of the autophagy-specific VPS34 PI3-kinase complex I. This complex is essential to recruit the ATG8-phosphatidylinositol conjugate and the ATG12-ATG5 conjugate to the pre-autophagosomal structure. ATG14 mediates the specific binding of the VPS34 PI3-kinase complex I to the preautophagosomal structure (PAS). Required for survival and/or proliferation in kidneys and in brain. This chain is Autophagy-related protein 14, found in Candida glabrata (strain ATCC 2001 / BCRC 20586 / JCM 3761 / NBRC 0622 / NRRL Y-65 / CBS 138) (Yeast).